The chain runs to 132 residues: Cytochrome b5 (132 aa).

Positions G2–D78 constitute a Cytochrome b5 heme-binding domain. H37 and H61 together coordinate heme. Residues F104–I124 form a helical membrane-spanning segment.

The protein belongs to the cytochrome b5 family.

It is found in the endoplasmic reticulum membrane. The protein localises to the microsome membrane. In terms of biological role, membrane bound hemoprotein which function as an electron carrier for several membrane bound oxygenases. The protein is Cytochrome b5 of Borago officinalis (Bourrache).